The primary structure comprises 548 residues: ATP synthase subunit alpha (548 aa).

172–179 (GDRKTGKT) lines the ATP pocket. A disordered region spans residues 526–548 (AEAMDEADVEKESVKVRKPAPKK).

The protein belongs to the ATPase alpha/beta chains family. F-type ATPases have 2 components, CF(1) - the catalytic core - and CF(0) - the membrane proton channel. CF(1) has five subunits: alpha(3), beta(3), gamma(1), delta(1), epsilon(1). CF(0) has three main subunits: a(1), b(2) and c(9-12). The alpha and beta chains form an alternating ring which encloses part of the gamma chain. CF(1) is attached to CF(0) by a central stalk formed by the gamma and epsilon chains, while a peripheral stalk is formed by the delta and b chains.

It is found in the cell membrane. It catalyses the reaction ATP + H2O + 4 H(+)(in) = ADP + phosphate + 5 H(+)(out). Produces ATP from ADP in the presence of a proton gradient across the membrane. The alpha chain is a regulatory subunit. The polypeptide is ATP synthase subunit alpha (Mycolicibacterium gilvum (strain PYR-GCK) (Mycobacterium gilvum (strain PYR-GCK))).